The following is an 89-amino-acid chain: Small ribosomal subunit protein uS15 (89 aa).

This sequence belongs to the universal ribosomal protein uS15 family. As to quaternary structure, part of the 30S ribosomal subunit. Forms a bridge to the 50S subunit in the 70S ribosome, contacting the 23S rRNA.

Its function is as follows. One of the primary rRNA binding proteins, it binds directly to 16S rRNA where it helps nucleate assembly of the platform of the 30S subunit by binding and bridging several RNA helices of the 16S rRNA. In terms of biological role, forms an intersubunit bridge (bridge B4) with the 23S rRNA of the 50S subunit in the ribosome. The polypeptide is Small ribosomal subunit protein uS15 (Psychromonas ingrahamii (strain DSM 17664 / CCUG 51855 / 37)).